A 585-amino-acid polypeptide reads, in one-letter code: Pre-hexon-linking protein IIIa (585 aa).

Positions 1 to 24 (MMQDATDPAVRAALQSQPSGLNST) are disordered. The interval 1–106 (MMQDATDPAV…ALLQRVARYN (106 aa)) is peripentonal hexon-tethering domain. Residues 14–24 (LQSQPSGLNST) show a composition bias toward polar residues. Residues 138-251 (GSMVALNAFL…FTDSGSVSRD (114 aa)) are binding to hexon-linking protein. Residue S225 is modified to Phosphoserine; by host. Phosphothreonine; by host is present on T274. Phosphoserine; by host occurs at positions 310, 444, 449, 450, 452, 469, and 473. The disordered stretch occupies residues 438–475 (AALRKESFRRPSSLSDLGAAAPRSDASSPFPSLIGSFT). Residues 462–475 (DASSPFPSLIGSFT) are compositionally biased toward polar residues. Phosphotyrosine; by host is present on Y490. A phosphoserine; by host mark is found at S494 and S515. Residues 528 to 573 (QEHRDVPGPRPPTRRQRHDRQRGLVWEDDDSADDSSVLDLGGSGNP) are disordered. Positions 571–585 (GNPFAHLRPRLGRMF) are excised as a propeptide.

Belongs to the adenoviridae hexon-linking protein IIIa family. Interacts with hexon proteins; this interaction tethers the peripentonal hexons to hexons situated in the facet. Interacts with the penton protein (via N-terminus). Interacts with packaging protein 3; this interaction is required to promote correct genome packaging. In terms of processing, cleaved near the C-terminus by the viral protease during virion maturation to form the mature protein.

The protein resides in the virion. It localises to the host nucleus. In terms of biological role, structural component of the virion that acts as a cement protein on the capsid exterior which mediates the interactions between the hexons, including the peripentonal hexons, and reaches all the way to the penton vertices. Two hexon linking proteins IIIa, one from each facet, stabilize the unique edge interface between a pair of facets. As the virus enters the host cell, hexon linking proteins IIIa are shed concomitant with virion acidification in the endosome. During virus assembly, seems to play a role in the serotype specificity of the packaging of viral DNA via its interaction with packaging protein 3. The chain is Pre-hexon-linking protein IIIa from Human adenovirus C serotype 2 (HAdV-2).